The sequence spans 162 residues: Beta-lactoglobulin (162 aa).

3 disulfide bridges follow: cysteine 66/cysteine 160, cysteine 106/cysteine 119, and cysteine 106/cysteine 121.

This sequence belongs to the calycin superfamily. Lipocalin family. Under physiological conditions beta-lactoglobulin exists as an equilibrium mixture of monomeric and dimeric forms. In terms of processing, alternate disulfide bonds occur in equal amounts.

The protein resides in the secreted. Functionally, lactoglobulin is the primary component of whey, it binds retinol and is probably involved in the transport of that molecule. This chain is Beta-lactoglobulin (LGB), found in Ovis aries musimon (Mouflon).